A 229-amino-acid polypeptide reads, in one-letter code: Ribosome maturation factor RimM (229 aa).

The PRC barrel domain maps to 148-229 (ADEFYWVDLI…RVVVDWEADY (82 aa)).

It belongs to the RimM family. Binds ribosomal protein uS19.

The protein resides in the cytoplasm. Its function is as follows. An accessory protein needed during the final step in the assembly of 30S ribosomal subunit, possibly for assembly of the head region. Essential for efficient processing of 16S rRNA. May be needed both before and after RbfA during the maturation of 16S rRNA. It has affinity for free ribosomal 30S subunits but not for 70S ribosomes. The sequence is that of Ribosome maturation factor RimM from Burkholderia pseudomallei (strain 1710b).